A 237-amino-acid chain; its full sequence is Purine nucleoside phosphorylase DeoD-type (237 aa).

Residue His5 participates in a purine D-ribonucleoside binding. Residues Gly21, Arg25, Arg44, and 88-91 (RVGS) contribute to the phosphate site. Residues 180-182 (EME) and 204-205 (SD) each bind a purine D-ribonucleoside. Asp205 (proton donor) is an active-site residue.

It belongs to the PNP/UDP phosphorylase family. Homohexamer; trimer of homodimers.

It catalyses the reaction a purine D-ribonucleoside + phosphate = a purine nucleobase + alpha-D-ribose 1-phosphate. The catalysed reaction is a purine 2'-deoxy-D-ribonucleoside + phosphate = a purine nucleobase + 2-deoxy-alpha-D-ribose 1-phosphate. Its function is as follows. Catalyzes the reversible phosphorolytic breakdown of the N-glycosidic bond in the beta-(deoxy)ribonucleoside molecules, with the formation of the corresponding free purine bases and pentose-1-phosphate. This Edwardsiella ictaluri (strain 93-146) protein is Purine nucleoside phosphorylase DeoD-type.